A 419-amino-acid chain; its full sequence is Phosphatidylcholine:ceramide cholinephosphotransferase 1 (419 aa).

Residues 13–76 (WSPKKVADWL…LDMIETLKME (64 aa)) form the SAM domain. The residue at position 14 (S14) is a Phosphoserine. A run of 5 helical transmembrane segments spans residues 142 to 162 (FLAF…ISVV), 190 to 210 (FSIC…QWLL), 221 to 241 (FFCI…VTTL), 282 to 302 (MCGD…YLFI), and 310 to 330 (LWWY…CILL). Residue H291 is part of the active site. Topologically, residues 331 to 419 (AHDHYTVDVV…VKYSRLVNDT (89 aa)) are cytoplasmic. Active-site residues include H334 and D338.

Belongs to the sphingomyelin synthase family. In terms of tissue distribution, isoform 1 is widely expressed, isoform 2 shows a more narrow distribution and isoform 3 is detected only in testis and heart.

The protein resides in the golgi apparatus membrane. The catalysed reaction is an N-acylsphing-4-enine + a 1,2-diacyl-sn-glycero-3-phosphocholine = a sphingomyelin + a 1,2-diacyl-sn-glycerol. The enzyme catalyses 1-(9Z-octadecenoyl)-2-acyl-sn-3-glycerol + a sphingomyelin = a 1-(9Z-octadecenoyl)-2-acyl-sn-glycero-3-phosphocholine + an N-acylsphing-4-enine. It catalyses the reaction N-hexadecanoylsphinganine + a 1,2-diacyl-sn-glycero-3-phosphocholine = N-hexadecanoyl-sphinganine-1-phosphocholine + a 1,2-diacyl-sn-glycerol. It carries out the reaction N-hexadecanoyl-(4R)-hydroxysphinganine + a 1,2-diacyl-sn-glycero-3-phosphocholine = N-hexadecanoyl-(4R)-hydroxysphinganine-phosphocholine + a 1,2-diacyl-sn-glycerol. The catalysed reaction is an N-acylsphing-4-enine + a 1,2-diacyl-sn-glycero-3-phosphoethanolamine = an N-acylsphing-4-enine 1-phosphoethanolamine + a 1,2-diacyl-sn-glycerol. It functions in the pathway sphingolipid metabolism. Its function is as follows. Major sphingomyelin synthase at the Golgi apparatus. Catalyzes the reversible transfer of phosphocholine moiety in sphingomyelin biosynthesis: in the forward reaction transfers phosphocholine head group of phosphatidylcholine (PC) on to ceramide (CER) to form ceramide phosphocholine (sphingomyelin, SM) and diacylglycerol (DAG) as by-product, and in the reverse reaction transfers phosphocholine from SM to DAG to form PC and CER. The direction of the reaction depends on the levels of CER and DAG in Golgi membranes. Converts the newly synthesized CER, that is transported from the endoplasmic reticulum to the trans-Golgi by the Cer transport protein (CERT), to SM. Can form a heteromeric complex with glucosylceramide synthase (GCS) increasing SMS activity and reducing glucosylceramide synthesis, a critical mechanism that controls the metabolic fate of CER in the Golgi. Does not use free phosphorylcholine or CDP-choline as donor. Can also transfer phosphoethanolamine head group of phosphatidylethanolamine (PE) on to CER to form ceramide phosphoethanolamine (CPE). Regulates receptor-mediated signal transduction via mitogenic DAG and proapoptotic CER, as well as via SM, a structural component of membrane rafts that serve as platforms for signal transduction and protein sorting. Plays a role in secretory transport via regulation of DAG pool at the Golgi apparatus and its downstream effects on PRKD1. Functionally, (Microbial infection) Contributes to the brain SM production for Japanese encephalitis virus attachment and infection. This chain is Phosphatidylcholine:ceramide cholinephosphotransferase 1 (Sgms1), found in Mus musculus (Mouse).